Reading from the N-terminus, the 322-residue chain is tRNA U34 carboxymethyltransferase (322 aa).

Residues Lys90, Trp104, Lys109, Gly129, 151 to 153 (DPT), 180 to 181 (IE), Met195, Tyr199, and Arg314 contribute to the carboxy-S-adenosyl-L-methionine site.

This sequence belongs to the class I-like SAM-binding methyltransferase superfamily. CmoB family. Homotetramer.

It carries out the reaction carboxy-S-adenosyl-L-methionine + 5-hydroxyuridine(34) in tRNA = 5-carboxymethoxyuridine(34) in tRNA + S-adenosyl-L-homocysteine + H(+). Catalyzes carboxymethyl transfer from carboxy-S-adenosyl-L-methionine (Cx-SAM) to 5-hydroxyuridine (ho5U) to form 5-carboxymethoxyuridine (cmo5U) at position 34 in tRNAs. This Citrobacter koseri (strain ATCC BAA-895 / CDC 4225-83 / SGSC4696) protein is tRNA U34 carboxymethyltransferase.